Consider the following 357-residue polypeptide: Cinnamyl alcohol dehydrogenase 1 (357 aa).

A Zn(2+)-binding site is contributed by Cys-47. Thr-49 contributes to the NADP(+) binding site. His-69, Glu-70, Cys-100, Cys-103, Cys-106, Cys-114, and Cys-163 together coordinate Zn(2+). NADP(+)-binding positions include Thr-167, 188–193 (GLGGVG), 211–216 (SSSDKK), Thr-251, Gly-275, and 298–300 (SFI).

The protein belongs to the zinc-containing alcohol dehydrogenase family. As to quaternary structure, homodimer. The cofactor is Zn(2+). Expressed in leaves, mainly in peltate glands.

The catalysed reaction is (E)-cinnamyl alcohol + NADP(+) = (E)-cinnamaldehyde + NADPH + H(+). The enzyme catalyses (E)-coniferol + NADP(+) = (E)-coniferaldehyde + NADPH + H(+). It carries out the reaction (E)-sinapyl alcohol + NADP(+) = (E)-sinapaldehyde + NADPH + H(+). It catalyses the reaction (E)-4-coumaroyl alcohol + NADP(+) = (E)-4-coumaraldehyde + NADPH + H(+). The catalysed reaction is (E)-caffeyl alcohol + NADP(+) = (E)-caffeyl aldehyde + NADPH + H(+). The protein operates within aromatic compound metabolism; phenylpropanoid biosynthesis. 60% inhibition by 5 mM Ca(+), Mg(+) or Cu(+). Functionally, involved in the production of citral, a mixture of geranial and neral with a strong lemony scent. Reversibly oxidizes geraniol to produce geranial at half the efficiency compared with its activity with cinnamyl alcohol. Does not use nerol and neral as substrates. The protein is Cinnamyl alcohol dehydrogenase 1 (CAD1) of Ocimum basilicum (Sweet basil).